A 378-amino-acid chain; its full sequence is Uroporphyrinogen decarboxylase (378 aa).

Substrate contacts are provided by residues 40-44 (RQAGR), D90, Y167, S222, and H355.

This sequence belongs to the uroporphyrinogen decarboxylase family. Homodimer.

It localises to the cytoplasm. It catalyses the reaction uroporphyrinogen III + 4 H(+) = coproporphyrinogen III + 4 CO2. The protein operates within porphyrin-containing compound metabolism; protoporphyrin-IX biosynthesis; coproporphyrinogen-III from 5-aminolevulinate: step 4/4. Functionally, catalyzes the decarboxylation of four acetate groups of uroporphyrinogen-III to yield coproporphyrinogen-III. The chain is Uroporphyrinogen decarboxylase from Psychrobacter cryohalolentis (strain ATCC BAA-1226 / DSM 17306 / VKM B-2378 / K5).